The sequence spans 549 residues: uncharacterized protein (549 aa).

A signal peptide spans 1-19 (MNWRRIVWLLALVTLPTLA).

This is an uncharacterized protein from Escherichia coli (strain K12).